The chain runs to 461 residues: Serine--tRNA ligase (461 aa).

The interval 112-134 (EVPFGRDENDNREHHTFGEKPRF) is disordered. Positions 114–134 (PFGRDENDNREHHTFGEKPRF) are enriched in basic and acidic residues. 252–254 (TAE) is an L-serine binding site. 283–285 (RAE) is an ATP binding site. Glu-306 lines the L-serine pocket. 370 to 373 (EISS) serves as a coordination point for ATP. Ser-406 contacts L-serine.

This sequence belongs to the class-II aminoacyl-tRNA synthetase family. Type-1 seryl-tRNA synthetase subfamily. In terms of assembly, homodimer. The tRNA molecule binds across the dimer.

Its subcellular location is the cytoplasm. It catalyses the reaction tRNA(Ser) + L-serine + ATP = L-seryl-tRNA(Ser) + AMP + diphosphate + H(+). It carries out the reaction tRNA(Sec) + L-serine + ATP = L-seryl-tRNA(Sec) + AMP + diphosphate + H(+). The protein operates within aminoacyl-tRNA biosynthesis; selenocysteinyl-tRNA(Sec) biosynthesis; L-seryl-tRNA(Sec) from L-serine and tRNA(Sec): step 1/1. Catalyzes the attachment of serine to tRNA(Ser). Is also able to aminoacylate tRNA(Sec) with serine, to form the misacylated tRNA L-seryl-tRNA(Sec), which will be further converted into selenocysteinyl-tRNA(Sec). In Methylocella silvestris (strain DSM 15510 / CIP 108128 / LMG 27833 / NCIMB 13906 / BL2), this protein is Serine--tRNA ligase.